The chain runs to 758 residues: Probable TonB-dependent receptor NMB0964 (758 aa).

A signal peptide spans 1-24; that stretch reads MAQTTLKPIVLSILLINTPLLAQA. A TBDR plug domain is found at 50 to 161; the sequence is LLHTSTASDK…VAGLVDVADG (112 aa). The region spanning 171 to 758 is the TBDR beta-barrel domain; that stretch reads GVSGELGLRL…SFTGGVNVKF (588 aa). A TonB C-terminal box motif is present at residues 741–758; sequence SDTPQMGRSFTGGVNVKF.

Belongs to the TonB-dependent receptor family.

It is found in the cell outer membrane. In terms of biological role, probable receptor, TonB-dependent. In Neisseria meningitidis serogroup B (strain ATCC BAA-335 / MC58), this protein is Probable TonB-dependent receptor NMB0964.